The chain runs to 243 residues: Transcription factor TFIIS homolog (243 aa).

One can recognise a TFIIS central domain in the interval 77–201; the sequence is MRDIIQMMFF…SQQKVAEKTS (125 aa). The TFIIS-type zinc finger occupies 202-242; sequence QLYKCPNCKQRMCTYREVQTRALDEPSTIFCTCKKCGHEFI. 4 residues coordinate Zn(2+): cysteine 206, cysteine 209, cysteine 234, and cysteine 237.

This sequence belongs to the TFS-II family.

Functionally, putative initiation factor. Necessary for efficient transcription elongation past template-encoded arresting sites. This chain is Transcription factor TFIIS homolog, found in Ornithodoros (relapsing fever ticks).